The sequence spans 405 residues: Cellobiose 2-epimerase (405 aa).

Belongs to the cellobiose 2-epimerase family.

It carries out the reaction D-cellobiose = beta-D-glucosyl-(1-&gt;4)-D-mannopyranose. In terms of biological role, catalyzes the reversible epimerization of cellobiose to 4-O-beta-D-glucopyranosyl-D-mannose (Glc-Man). Can also epimerize lactose to epilactose. In Eubacterium cellulosolvens, this protein is Cellobiose 2-epimerase (ce13).